The chain runs to 104 residues: Large ribosomal subunit protein uL24 (104 aa).

The protein belongs to the universal ribosomal protein uL24 family. As to quaternary structure, part of the 50S ribosomal subunit.

In terms of biological role, one of two assembly initiator proteins, it binds directly to the 5'-end of the 23S rRNA, where it nucleates assembly of the 50S subunit. One of the proteins that surrounds the polypeptide exit tunnel on the outside of the subunit. This chain is Large ribosomal subunit protein uL24, found in Hydrogenovibrio crunogenus (strain DSM 25203 / XCL-2) (Thiomicrospira crunogena).